A 95-amino-acid chain; its full sequence is Integration host factor subunit beta (95 aa).

Residues Arg56–Tyr76 form a disordered region.

It belongs to the bacterial histone-like protein family. As to quaternary structure, heterodimer of an alpha and a beta chain.

Functionally, this protein is one of the two subunits of integration host factor, a specific DNA-binding protein that functions in genetic recombination as well as in transcriptional and translational control. This is Integration host factor subunit beta from Shewanella woodyi (strain ATCC 51908 / MS32).